Reading from the N-terminus, the 99-residue chain is Signal recognition particle 19 kDa protein (99 aa).

The protein belongs to the SRP19 family. In terms of assembly, part of the signal recognition particle protein translocation system, which is composed of SRP and FtsY. Archaeal SRP consists of a 7S RNA molecule of 300 nucleotides and two protein subunits: SRP54 and SRP19.

It is found in the cytoplasm. In terms of biological role, involved in targeting and insertion of nascent membrane proteins into the cytoplasmic membrane. Binds directly to 7S RNA and mediates binding of the 54 kDa subunit of the SRP. This chain is Signal recognition particle 19 kDa protein, found in Ignicoccus hospitalis (strain KIN4/I / DSM 18386 / JCM 14125).